Reading from the N-terminus, the 557-residue chain is MDFKKTIFWAAFSMSGLMLYNNWQVHEGKPSLFGGAPASAPAVADKATTNNKVDVPTQISGAPSVAATPIINGGAIESAEKFTLQNDVLVLEISASGANVIDAKLLKSLTAENKPVELFQYTPTHKYFARSGLVSLNNNDLPNHTSTFKLVQSGKDGSGRPFAVFASERNGVRLEKTFILNPGSYVVDVGHRVTQSTSNPNPLVLYTEIVRDASQEQKIGPFGGAFSANTFTGPVAYTDKEKFNKLEFSAIDKNKITIPTLVAAGEPAWIAMVQHYFASAWIPGDKVARDIYTGRIDNGLYRIGMQTPLGMVGPGSTVVEKAKLFVGPQEERVLETIAPGFELLKDYGYLTILAKPIFWLLDNIHFYVGNWGWSIILLTILIKLVFFPLSAASYKSMARMKEVQPRLVAMKEQYKGEPQKLNQAMMEMYRKEKINPLGGCLPVVIQIPVFISLYWVLLSSVETRGAPWILWIHDLSVPDPYYILPVIMAVSMFVQTKLNPTPPDPIQAKVMMYMPIVFSVMFFFFPAGLVLYWVVNNLLSIAQQWQINQMFGKKPAK.

Transmembrane regions (helical) follow at residues 371–391 (WGWSIILLTILIKLVFFPLSA), 437–457 (LGGCLPVVIQIPVFISLYWVL), and 515–535 (PIVFSVMFFFFPAGLVLYWVV).

Belongs to the OXA1/ALB3/YidC family. Type 1 subfamily. Interacts with the Sec translocase complex via SecD. Specifically interacts with transmembrane segments of nascent integral membrane proteins during membrane integration.

It localises to the cell inner membrane. In terms of biological role, required for the insertion and/or proper folding and/or complex formation of integral membrane proteins into the membrane. Involved in integration of membrane proteins that insert both dependently and independently of the Sec translocase complex, as well as at least some lipoproteins. Aids folding of multispanning membrane proteins. The chain is Membrane protein insertase YidC from Polynucleobacter necessarius subsp. necessarius (strain STIR1).